An 86-amino-acid polypeptide reads, in one-letter code: Small ribosomal subunit protein uS17 (86 aa).

This sequence belongs to the universal ribosomal protein uS17 family. Part of the 30S ribosomal subunit.

One of the primary rRNA binding proteins, it binds specifically to the 5'-end of 16S ribosomal RNA. In Chlamydia pneumoniae (Chlamydophila pneumoniae), this protein is Small ribosomal subunit protein uS17.